Consider the following 1074-residue polypeptide: Semaphorin-5A (1074 aa).

The first 22 residues, methionine 1–proline 22, serve as a signal peptide directing secretion. One can recognise a Sema domain in the interval histidine 35–leucine 484. Intrachain disulfides connect cysteine 104–cysteine 114 and cysteine 131–cysteine 140. N-linked (GlcNAc...) asparagine glycosylation is found at asparagine 147, asparagine 168, asparagine 227, and asparagine 277. 2 disulfides stabilise this stretch: cysteine 254/cysteine 357 and cysteine 278/cysteine 320. N-linked (GlcNAc...) asparagine glycosylation is found at asparagine 323 and asparagine 367. One can recognise a PSI domain in the interval arginine 486–proline 533. 2 N-linked (GlcNAc...) asparagine glycosylation sites follow: asparagine 536 and asparagine 591. TSP type-1 domains are found at residues aspartate 540–serine 593, asparagine 595–proline 651, and histidine 653–proline 702. 6 disulfide bridges follow: cysteine 607–cysteine 644, cysteine 611–cysteine 650, cysteine 622–cysteine 634, cysteine 665–cysteine 696, cysteine 669–cysteine 701, and cysteine 680–cysteine 686. N-linked (GlcNAc...) asparagine glycosylation occurs at asparagine 717. 3 TSP type-1 domains span residues asparagine 784–proline 839, aspartate 841–proline 896, and glutamate 897–serine 944. 6 disulfides stabilise this stretch: cysteine 796–cysteine 833, cysteine 800–cysteine 838, cysteine 811–cysteine 823, cysteine 853–cysteine 890, cysteine 857–cysteine 895, and cysteine 868–cysteine 880. N-linked (GlcNAc...) asparagine glycans are attached at residues asparagine 898 and asparagine 933. The helical transmembrane segment at phenylalanine 969–valine 989 threads the bilayer. The N-linked (GlcNAc...) asparagine glycan is linked to asparagine 1015.

As to quaternary structure, binds PLXNB3.

It is found in the membrane. Bifunctional axonal guidance cue regulated by sulfated proteoglycans; attractive effects result from interactions with heparan sulfate proteoglycans (HSPGs), while the inhibitory effects depend on interactions with chondroitin sulfate proteoglycans (CSPGs). Ligand for receptor PLXNB3. In glioma cells, SEMA5A stimulation of PLXNB3 results in the disassembly of F-actin stress fibers, disruption of focal adhesions and cellular collapse as well as inhibition of cell migration and invasion through ARHGDIA-mediated inactivation of RAC1. May promote angiogenesis by increasing endothelial cell proliferation and migration and inhibiting apoptosis. This Rattus norvegicus (Rat) protein is Semaphorin-5A (Sema5a).